The chain runs to 615 residues: Increased rDNA silencing protein 4 (615 aa).

Disordered stretches follow at residues 38 to 135, 152 to 260, 277 to 304, and 323 to 445; these read SNEV…SSHS, LLGI…NRSQ, PSIASSNTTTTTSNQGSGLPNLVPNYSS, and KPKH…NEDK. Over residues 50–65 the composition is skewed to polar residues; that stretch reads VSRNPQTRLSEPSLQK. 2 stretches are compositionally biased toward low complexity: residues 121–135 and 157–168; these read HSQSKLSSDNNSSHS and SRSSSRNGSNES. Serine 180 bears the Phosphoserine mark. The span at 184–198 shows a compositional bias: low complexity; the sequence is LLTSFSSGRRLSSSS. The segment covering 248 to 260 has biased composition (polar residues); it reads NPDTSDVISNRSQ. Low complexity predominate over residues 281-290; that stretch reads SSNTTTTTSN. Residues 365–377 show a composition bias toward basic and acidic residues; it reads ENDHASSLHEGNL. The span at 389–402 shows a compositional bias: acidic residues; the sequence is DVYDDTDSDSESDQ. Basic residues predominate over residues 409 to 438; sequence KPRKRDRIKRKIRNSANKTAHHRPIHRTRD. The EH domain maps to 460-571; the sequence is ERKRYESMWV…QCVWDSVDRY (112 aa).

This sequence belongs to the IRS4 family. Interacts with INP51.

In terms of biological role, with TAX4, acts as a positive regulator of INP51 activity and phosphatidylinositol 4,5-bisphosphate turnover. Negatively regulates signaling through the cell integrity pathway, including the MAP kinase SLT2. Also seems to be involved in rDNA silencing. The protein is Increased rDNA silencing protein 4 (IRS4) of Saccharomyces cerevisiae (strain YJM789) (Baker's yeast).